Consider the following 354-residue polypeptide: Serum paraoxonase/arylesterase 2 (354 aa).

Cysteine 42 and cysteine 352 form a disulfide bridge. Ca(2+)-binding residues include glutamate 53 and aspartate 54. Histidine 114 serves as the catalytic Proton acceptor. Positions 116, 167, 168, and 223 each coordinate Ca(2+). The N-linked (GlcNAc...) asparagine glycan is linked to asparagine 254. Ca(2+) contacts are provided by aspartate 268 and asparagine 269. Asparagine 269 and asparagine 323 each carry an N-linked (GlcNAc...) asparagine glycan.

The protein belongs to the paraoxonase family. In terms of assembly, homotrimer. Ca(2+) is required as a cofactor. Post-translationally, glycosylated. The signal sequence is not cleaved.

The protein localises to the membrane. It catalyses the reaction a phenyl acetate + H2O = a phenol + acetate + H(+). It carries out the reaction an N-acyl-L-homoserine lactone + H2O = an N-acyl-L-homoserine + H(+). Functionally, capable of hydrolyzing lactones and a number of aromatic carboxylic acid esters. This Rattus norvegicus (Rat) protein is Serum paraoxonase/arylesterase 2 (Pon2).